The following is a 795-amino-acid chain: Toll-like receptor 6 (795 aa).

The signal sequence occupies residues 1–27; sequence MSQDRKPIVGSFHFVCALALIVGSMTP. Over 28-584 the chain is Extracellular; it reads FSNELESMVD…FHMSPLSCDT (557 aa). Asn42 carries N-linked (GlcNAc...) asparagine glycosylation. LRR repeat units lie at residues 54-77, 78-101, 102-125, 126-150, 151-175, 176-199, 200-223, 224-250, 251-278, 279-308, 309-337, 338-361, 362-388, 389-414, 415-437, 438-457, 458-478, 479-500, and 501-524; these read TKALSLSQNSISELRMPDISFLSE, LRVLRLSHNRIRSLDFHVFLFNQD, LEYLDVSHNRLQNISCCPMASLRH, LDLSFNDFDVLPVCKEFGNLTKLTF, LGLSAAKFRQLDLLPVAHLHLSCIL, LDLVSYHIKGGETESLQIPNTTVL, HLVFHPNSLFSVQVNMSVNALGHL, QLSNIKLNDENCQRLMTFLSELTRGPT, LLNVTLQHIETTWKCSVKLFQFFWPRPV, EYLNIYNLTITERIDREEFTYSETALKSLM, IEHVKNQVFLFSKEALYSVFAEMNIKMLS, ISDTPFIHMVCPPSPSSFTFLNFT, QNVFTDSVFQGCSTLKRLQTLILQRNG, LKNFFKVALMTKNMSSLETLDVSLNS, LNSHAYDRTCAWAESILVLNLSS, NMLTGSVFRCLPPKVKVLDL, HNNRIMSIPKDVTHLQALQEL, NVASNSLTDLPGCGAFSSLSVL, and VIDHNSVSHPSEDFFQSCQNIRSL. Asn114 carries an N-linked (GlcNAc...) asparagine glycan. A disulfide bridge connects residues Cys117 and Cys139. Residue Asn144 is glycosylated (N-linked (GlcNAc...) asparagine). 2 N-linked (GlcNAc...) asparagine glycosylation sites follow: Asn195 and Asn214. Cysteines 235 and 265 form a disulfide. Residues Asn253 and Asn285 are each glycosylated (N-linked (GlcNAc...) asparagine). Cys348 and Cys373 form a disulfide bridge. An N-linked (GlcNAc...) asparagine glycan is attached at Asn359. Asn401 and Asn434 each carry an N-linked (GlcNAc...) asparagine glycan. A disulfide bond links Cys424 and Cys447. The LRRCT domain occupies 525–576; that stretch reads TAGNNPFQCTCELRDFVKNIGWVAREVVEGWPDSYRCDYPESSKGTALRDFH. Residues 585-605 form a helical membrane-spanning segment; the sequence is VLLTVTIGATMLVLAVTGAFL. The Cytoplasmic segment spans residues 606-795; sequence CLYFDLPWYV…ALVNEDDVKT (190 aa). The 142-residue stretch at 640 to 781 folds into the TIR domain; it reads LQFHAFVSYS…LFWANLRASF (142 aa).

This sequence belongs to the Toll-like receptor family. In terms of assembly, homodimer (via cytoplasmic TIR domain). Heterodimer with TLR2 via their respective extracellular domains. Binds MYD88 via their respective TIR domains. Interacts with CD36, following CD36 stimulation by oxLDL or amyloid-beta 42, and forms a heterodimer with TLR4. The trimeric complex is internalized and triggers inflammatory response. LYN kinase activity facilitates TLR4:TLR6 heterodimerization and signal initiation. The heterodimer TLR2:TLR6 interacts with CD14 and CD36 in response to triacylated lipopeptides. As to expression, detected in thymus, spleen, ovary and lung. Expressed in macrohpages.

Its subcellular location is the cell membrane. The protein resides in the cytoplasmic vesicle. The protein localises to the phagosome membrane. It is found in the membrane raft. It localises to the golgi apparatus. Functionally, participates in the innate immune response to Gram-positive bacteria and fungi. Specifically recognizes diacylated and, to a lesser extent, triacylated lipopeptides. In response to diacylated lipopeptides, forms the activation cluster TLR2:TLR6:CD14:CD36, this cluster triggers signaling from the cell surface and subsequently is targeted to the Golgi in a lipid-raft dependent pathway. Acts via MYD88 and TRAF6, leading to NF-kappa-B activation, cytokine secretion and the inflammatory response. Recognizes mycoplasmal macrophage-activating lipopeptide-2kD (MALP-2), soluble tuberculosis factor (STF), phenol-soluble modulin (PSM) and B.burgdorferi outer surface protein A lipoprotein (OspA-L) cooperatively with TLR2. In complex with TLR4, promotes sterile inflammation in monocytes/macrophages in response to oxidized low-density lipoprotein (oxLDL) or amyloid-beta 42. In this context, the initial signal is provided by oxLDL- or amyloid-beta 42-binding to CD36. This event induces the formation of a heterodimer of TLR4 and TLR6, which is rapidly internalized and triggers inflammatory response, leading to the NF-kappa-B-dependent production of CXCL1, CXCL2 and CCL9 cytokines, via MYD88 signaling pathway, and CCL5 cytokine, via TICAM1 signaling pathway, as well as IL1B secretion. This is Toll-like receptor 6 (Tlr6) from Mus musculus (Mouse).